Consider the following 183-residue polypeptide: Threonylcarbamoyl-AMP synthase (183 aa).

One can recognise a YrdC-like domain in the interval 1-183 (MNITQIIEKL…LFTNQLVRQG (183 aa)).

The protein belongs to the SUA5 family. TsaC subfamily.

Its subcellular location is the cytoplasm. It carries out the reaction L-threonine + hydrogencarbonate + ATP = L-threonylcarbamoyladenylate + diphosphate + H2O. Its function is as follows. Required for the formation of a threonylcarbamoyl group on adenosine at position 37 (t(6)A37) in tRNAs that read codons beginning with adenine. Catalyzes the conversion of L-threonine, HCO(3)(-)/CO(2) and ATP to give threonylcarbamoyl-AMP (TC-AMP) as the acyladenylate intermediate, with the release of diphosphate. The chain is Threonylcarbamoyl-AMP synthase from Histophilus somni (strain 2336) (Haemophilus somnus).